A 44-amino-acid chain; its full sequence is Diuretic hormone (44 aa).

V44 is modified (valine amide).

The protein resides in the secreted. Functionally, regulation of fluid secretion. Stimulates primary urine secretion by Malpighian tubules and causes a dose-dependent stimulation of cAMP levels in the tubules. May act as clearance peptide in that it may remove metabolic waste from the hemolymph. This is Diuretic hormone from Stomoxys calcitrans (Stable fly).